The chain runs to 375 residues: Aldehyde reductase FrzD (375 aa).

Residues Ala-61, Gln-103, and His-171 each coordinate FMN. Tyr-176 serves as the catalytic Proton donor. FMN contacts are provided by Lys-223, Gly-294, and Arg-319.

The protein belongs to the NADH:flavin oxidoreductase/NADH oxidase family. Requires FMN as cofactor.

The enzyme catalyses (1S,4S)-4-[(4-hydroxyphenyl)methyl]-2,5-diazaspiro[bicyclo[3.2.1]octane-6,1'-cyclohexane]-2',5'-dien-4'-one + 2 NADPH + 2 H(+) = (1S,4S)-4-[(4-hydroxyphenyl)methyl]-2,5-diazaspiro[bicyclo[3.2.1]octane-6,1'-cyclohexan]-4'-one + 2 NADP(+). It participates in alkaloid biosynthesis; ergot alkaloid biosynthesis. Its function is as follows. Aldehyde reductase; part of the gene cluster that mediates the biosynthesis of the alkaloid (-)-FR901483, a potent immunosuppressant that shows efficacy in animal models and a probable inhibitor of purine nucleotide biosynthesis by targeting phosphoribosylpyrophosphate amidotransferase (PPAT). Within the pathway, FrzD reduces the dienone portion of the pathway intermediates to cyclohexanone. The biosynthesis of (-)-FR901483 starts with the condensation of two L-tyrosines to yield (S,S)-dityrosyl-piperazine. This process occurs in 3 steps with the non-canonical nonribosomal peptide synthetase FrzA catalyzing the reduction of L-tyrosine into L-tyrosinal, the spontaneous condensation of 2 L-tyrosinal units, and the subsequent reduction by the NmrA-like family domain-containing oxidoreductase FrzB. The cytochrome P450 monooxygenase FrzC then performs coupling between N10 and C1' to morph the piperazine into a 1,4-diazabicyclo[3.2.1]octane spiro-fused to a 2,5-cyclohexadienone. The dienone portion is further reduced to cyclohexanone by the flavin-dependent reductase FrzD. The methyltranserases (MTs) FrzE and FrzF are then involved in the methylation at the C10' amine and the C4 phenolic oxygen, respectively. The order of the two MTs appear to be interchangeable. Cleavage of the C9-N10' bond by the dioxygenase FrzG then leads to formation of a conjugated iminium. In addition to the oxidation of C9, an additional dehydrogenation between C7 and C8 can occur to give a likely shunt product. The next biosynthetic step is the intramolecular aldol condensation catalyzed by the newly identified aldolase FrzH to yield an aza-tricyclic product with the formation of a C9-C3' bond. The short-chain dehydrogenase/reductase FrzI then produces dephospho-(-)-FR901483 that is phosphorylated at C4'-OH into (-)-FR901483 by the phosphotransferase FrzJ. The only unassigned enzyme in the cluster is the second cytochrome P450 monooxygenase FrzL. The protein is Aldehyde reductase FrzD of Cladobotryum sp.